The sequence spans 348 residues: Ubiquitin thioesterase OTU1 (348 aa).

A compositionally biased stretch (basic residues) spans 1-11 (MFGPAKGRHFG). Positions 1 to 39 (MFGPAKGRHFGVHPAPGFPGGVSQQAAGTKAGPAGAWPV) are disordered. A UBX-like region spans residues 50–128 (RCKAKDGTHV…IIEEDQTRPR (79 aa)). In terms of domain architecture, OTU spans 149 to 274 (LTRTVVPADN…GIHYDPLQRN (126 aa)). The cys-loop stretch occupies residues 154–160 (VPADNSC). Asp157 is an active-site residue. The Nucleophile role is filled by Cys160. The interval 213–223 (IKRDDTWGGAI) is variable-loop. The segment at 263–267 (YDGIH) is his-loop. Ile266 serves as a coordination point for substrate. His267 is an active-site residue. The S2 site stretch occupies residues 291 to 296 (DIVLVQ). A C2H2-type zinc finger spans residues 318–342 (LRCMVCQKGLTGQAEAREHAKETGH). Residue His342 is part of the active site.

As to quaternary structure, interacts with VCP; the interaction is direct. Interacts with FAF2/UBXD8. Interacts with DERL1; however interaction is dependent on the UBAX-like region, suggesting that it may be indirect. Interacts with PLAA, UBXN6 and VCP; may form a complex involved in macroautophagy.

It localises to the cytoplasm. It catalyses the reaction Thiol-dependent hydrolysis of ester, thioester, amide, peptide and isopeptide bonds formed by the C-terminal Gly of ubiquitin (a 76-residue protein attached to proteins as an intracellular targeting signal).. Hydrolase that can remove conjugated ubiquitin from proteins and participates in endoplasmic reticulum-associated degradation (ERAD) for misfolded lumenal proteins. May act by triming the ubiquitin chain on the associated substrate to facilitate their threading through the VCP/p97 pore. Ubiquitin moieties on substrates may present a steric impediment to the threading process when the substrate is transferred to the VCP pore and threaded through VCP's axial channel. Mediates deubiquitination of 'Lys-27'-, 'Lys-29'- and 'Lys-33'-linked polyubiquitin chains. Also able to hydrolyze 'Lys-11'-linked ubiquitin chains. Cleaves both polyubiquitin and di-ubiquitin. May play a role in macroautophagy, regulating for instance the clearance of damaged lysosomes. May recruit PLAA, UBXN6 and VCP to damaged lysosome membranes decorated with K48-linked ubiquitin chains and remove these chains allowing autophagosome formation. The sequence is that of Ubiquitin thioesterase OTU1 (YOD1) from Homo sapiens (Human).